Reading from the N-terminus, the 559-residue chain is MKRELLCVLLLCGLAFPLPDQGIHGRFRRGARSYRATCRDEPTQTTYQQHQSWLRPMLRSSRVEYCRCNSGLVQCHSVPVRSCSEPRCFNGGTCQQALYFSDFVCQCPDGFVGKRCDIDTRATCFEEQGITYRGTWSTAESGAECINWNSSVLSLKPYNARRPNAIKLGLGNHNYCRNPDRDLKPWCYVFKAGKYTTEFCSTPACPKGKSEDCYVGKGVTYRGTHSLTTSQASCLPWNSIVLMGKSYTAWRTNSQALGLGRHNYCRNPDGDARPWCHVMKDRKLTWEYCDMSPCSTCGLRQYKRPQFRIKGGLYTDITSHPWQAAIFVKNKRSPGERFLCGGVLISSCWVLSAAHCFLERFPPNHLKVVLGRTYRVVPGEEEQTFEIEKYIVHEEFDDDTYDNDIALLQLRSQSKQCAQESSSVGTACLPDPNLQLPDWTECELSGYGKHEASSPFFSDRLKEAHVRLYPSSRCTSQHLFNKTVTNNMLCAGDTRSGGNQDLHDACQGDSGGPLVCMINKQMTLTGIISWGLGCGQKDVPGVYTKVTNYLDWIHDNMKQ.

Positions 1-17 (MKRELLCVLLLCGLAFP) are cleaved as a signal peptide. The propeptide occupies 18–29 (LPDQGIHGRFRR). Positions 30–32 (GAR) are cleaved as a propeptide — removed by plasmin. Positions 36–78 (ATCRDEPTQTTYQQHQSWLRPMLRSSRVEYCRCNSGLVQCHSV) constitute a Fibronectin type-I domain. 17 disulfide bridges follow: cysteine 38/cysteine 68, cysteine 66/cysteine 75, cysteine 83/cysteine 94, cysteine 88/cysteine 105, cysteine 107/cysteine 116, cysteine 124/cysteine 205, cysteine 145/cysteine 187, cysteine 176/cysteine 200, cysteine 213/cysteine 294, cysteine 234/cysteine 276, cysteine 265/cysteine 289, cysteine 297/cysteine 428, cysteine 340/cysteine 356, cysteine 348/cysteine 417, cysteine 442/cysteine 516, cysteine 474/cysteine 490, and cysteine 506/cysteine 534. The segment at 39–49 (RDEPTQTTYQQ) is important for binding to annexin A2. The EGF-like domain maps to 79-117 (PVRSCSEPRCFNGGTCQQALYFSDFVCQCPDGFVGKRCD). 2 consecutive Kringle domains span residues 124 to 205 (CFEE…TPAC) and 213 to 294 (CYVG…MSPC). Asparagine 149 carries N-linked (GlcNAc...) asparagine glycosylation. The Peptidase S1 domain occupies 309 to 558 (IKGGLYTDIT…YLDWIHDNMK (250 aa)). Active-site charge relay system residues include histidine 355 and aspartate 404. Residue asparagine 481 is glycosylated (N-linked (GlcNAc...) asparagine). The Charge relay system role is filled by serine 510.

Belongs to the peptidase S1 family. Heterodimer of chain A and chain B held by a disulfide bond. Binds to fibrin with high affinity. This interaction leads to an increase in the catalytic efficiency of the enzyme due to an increase in affinity for plasminogen. Similarly, binding to heparin increases the activation of plasminogen. Binds to annexin A2, cytokeratin-8, fibronectin and laminin. Binds to mannose receptor and the low-density lipoprotein receptor-related protein (LRP1); these proteins are involved in TPA clearance. Binds LRP1B; binding is followed by internalization and degradation. Forms heterodimer with SERPINA5. Interacts with SERPINE1. In complex with SERPINE1, interacts with SORL1. Post-translationally, the single chain, almost fully active enzyme, can be further processed into a two-chain fully active form by a cleavage after Arg-308 catalyzed by plasmin, tissue kallikrein or factor Xa.

Its subcellular location is the secreted. It is found in the extracellular space. The enzyme catalyses Specific cleavage of Arg-|-Val bond in plasminogen to form plasmin.. With respect to regulation, inhibited by SERPINA5. Inhibited by SERPINE1. Its function is as follows. Converts the abundant, but inactive, zymogen plasminogen to plasmin by hydrolyzing a single Arg-Val bond in plasminogen. By controlling plasmin-mediated proteolysis, it plays an important role in tissue remodeling and degradation, in cell migration and many other physiopathological events. During oocyte activation, plays a role in cortical granule reaction in the zona reaction, which contributes to the block to polyspermy. This Mus musculus (Mouse) protein is Tissue-type plasminogen activator (Plat).